The primary structure comprises 132 residues: Small ribosomal subunit protein eS12 (132 aa).

Residue Ala2 is modified to N-acetylalanine. Residue Lys129 is modified to N6-succinyllysine.

The protein belongs to the eukaryotic ribosomal protein eS12 family. As to quaternary structure, part of the small subunit (SSU) processome, composed of more than 70 proteins and the RNA chaperone small nucleolar RNA (snoRNA) U3. Subunit of the 40S ribosomal complex.

Its subcellular location is the nucleus. It is found in the nucleolus. Part of the small subunit (SSU) processome, first precursor of the small eukaryotic ribosomal subunit. During the assembly of the SSU processome in the nucleolus, many ribosome biogenesis factors, an RNA chaperone and ribosomal proteins associate with the nascent pre-rRNA and work in concert to generate RNA folding, modifications, rearrangements and cleavage as well as targeted degradation of pre-ribosomal RNA by the RNA exosome. Subunit of the 40S ribosomal complex. The chain is Small ribosomal subunit protein eS12 (Rps12) from Rattus norvegicus (Rat).